A 319-amino-acid chain; its full sequence is Putative antiporter CaxA (319 aa).

10 helical membrane-spanning segments follow: residues 3 to 23 (VATIFVLVGLVLLIWSADRFV), 38 to 58 (MIIGLTIVAMGSSAPEIMVSA), 81 to 101 (ILLVIGATALLKPIAVASMTI), 105 to 125 (FPLLILVTLLGYLFLADQSLT), 127 to 147 (AEGALFLGGFVLFLVLMVYWG), 175 to 195 (VWLVLGLALLLASSQLLVHGA), 208 to 228 (LIGLTIIAIGTSLPELAASLI), 250 to 270 (ILAVLGVGTIIAPGVIDAAAA), 275 to 292 (YVMMAATLALLLMSLRLG), and 297 to 317 (INRVEGCILLMAFIGYQYLLF).

The protein belongs to the Ca(2+):cation antiporter (CaCA) (TC 2.A.19) family.

The protein localises to the cell membrane. In terms of biological role, confers modest Ca(2+) and Na(+) resistance. The polypeptide is Putative antiporter CaxA (caxA) (Alkalimonas amylolytica).